The sequence spans 264 residues: Small ribosomal subunit protein uS2 (264 aa).

Belongs to the universal ribosomal protein uS2 family.

The chain is Small ribosomal subunit protein uS2 from Latilactobacillus sakei subsp. sakei (strain 23K) (Lactobacillus sakei subsp. sakei).